We begin with the raw amino-acid sequence, 407 residues long: Polygalacturonase (407 aa).

The N-terminal stretch at 1 to 26 (MAPHLNIVPSMFVLLLLFISASKVQP) is a signal peptide. 2 PbH1 repeats span residues 180–206 (CKNI…HMGK) and 207–228 (SEGV…SIGD). Asn-182 carries an N-linked (GlcNAc...) asparagine glycan. The active-site Proton donor is Asp-221. Cys-223 and Cys-240 are oxidised to a cystine. The active site involves His-244. 2 PbH1 repeats span residues 260-281 (VEGI…RIKT) and 290-311 (VSEI…LIDQ). N-linked (GlcNAc...) asparagine glycosylation is found at Asn-267, Asn-272, Asn-302, and Asn-331. Disulfide bonds link Cys-351/Cys-357 and Cys-379/Cys-395. The stretch at 357-384 (CQNVELADIDIQHNGAEPATSQCLNVKP) is one PbH1 5 repeat.

Belongs to the glycosyl hydrolase 28 family. In terms of tissue distribution, pollen.

The protein localises to the secreted. The protein resides in the cell wall. It catalyses the reaction (1,4-alpha-D-galacturonosyl)n+m + H2O = (1,4-alpha-D-galacturonosyl)n + (1,4-alpha-D-galacturonosyl)m.. Its function is as follows. May function in the depolymerization of the pectin in its walls during pollen tube elongation, or in that of the pistil during pollination. The protein is Polygalacturonase (G9) of Gossypium barbadense (Sea Island cotton).